The following is a 155-amino-acid chain: MPSIDEVDEIILRELSKNGRATLTELSRKVGLTPAAIKNRVEKLEKLGVIKGYSAIIDHSFLGEFLTALIEIELADPESDELSKLIRPILKLENIKDVYKKTGEFQLTIRATFRDVDSLNEFLKKIRRDYLKNMARRIKVSIILENFKEGGVTLL.

The region spanning 4–65 is the HTH asnC-type domain; that stretch reads IDEVDEIILR…IIDHSFLGEF (62 aa). The H-T-H motif DNA-binding region spans 23–42; the sequence is LTELSRKVGLTPAAIKNRVE.

This is an uncharacterized protein from Pyrococcus furiosus (strain ATCC 43587 / DSM 3638 / JCM 8422 / Vc1).